Reading from the N-terminus, the 116-residue chain is Large ribosomal subunit protein uL18 (116 aa).

Belongs to the universal ribosomal protein uL18 family. In terms of assembly, part of the 50S ribosomal subunit; part of the 5S rRNA/L5/L18/L25 subcomplex. Contacts the 5S and 23S rRNAs.

Its function is as follows. This is one of the proteins that bind and probably mediate the attachment of the 5S RNA into the large ribosomal subunit, where it forms part of the central protuberance. The chain is Large ribosomal subunit protein uL18 from Shewanella loihica (strain ATCC BAA-1088 / PV-4).